The following is a 78-amino-acid chain: Conotoxin 5 (78 aa).

A signal peptide spans 1 to 22; the sequence is MKLTCMMIVTVLFLTAWIFITA. The propeptide occupies 23–49; sequence DNSRNGIENLPRMRRHEMKNPKASKLN. Disulfide bonds link C53–C69, C60–C73, and C68–C77.

The protein belongs to the conotoxin O1 superfamily. In terms of tissue distribution, expressed by the venom duct.

It localises to the secreted. This is Conotoxin 5 from Conus imperialis (Imperial cone).